The sequence spans 267 residues: 5'-nucleotidase SurE (267 aa).

Positions 9, 10, 40, and 97 each coordinate a divalent metal cation.

The protein belongs to the SurE nucleotidase family. It depends on a divalent metal cation as a cofactor.

Its subcellular location is the cytoplasm. The catalysed reaction is a ribonucleoside 5'-phosphate + H2O = a ribonucleoside + phosphate. In terms of biological role, nucleotidase that shows phosphatase activity on nucleoside 5'-monophosphates. This Helicobacter pylori (strain HPAG1) protein is 5'-nucleotidase SurE.